A 266-amino-acid chain; its full sequence is Putative peptidyl-prolyl cis-trans isomerase NifM (266 aa).

The region spanning 124–221 (PEQRLTRHLL…LGWHLLWCEA (98 aa)) is the PpiC domain.

Belongs to the PpiC/parvulin rotamase family.

It catalyses the reaction [protein]-peptidylproline (omega=180) = [protein]-peptidylproline (omega=0). Its function is as follows. Required for the activation and stabilization of the iron-component (NifH) of nitrogenase. Probable PPIase. In Klebsiella oxytoca, this protein is Putative peptidyl-prolyl cis-trans isomerase NifM (nifM).